Consider the following 525-residue polypeptide: Sucrose transport protein (525 aa).

Residues 1–37 (MAGRNIKNGENNKIAGSSLHLEKNPTTPPEAEATLKK) lie on the Cytoplasmic side of the membrane. 12 helical membrane passes run 38–58 (LGLV…QLSL), 72–92 (WAAY…PLVG), 107–127 (PFIA…GFAA), 145–165 (AIAV…TLQG), 184–204 (YANA…YAAG), 230–250 (SCFF…LSVV), 295–315 (MLIL…FLLF), 338–358 (GVHA…VMSL), 373–393 (LWGI…LVTK), 422–442 (LAIF…PFAL), 455–475 (GLSL…VSVT), and 488–508 (LPAF…SFTL). Topologically, residues 509–525 (LPSPPPEAKIGGSMGGH) are cytoplasmic.

Belongs to the glycoside-pentoside-hexuronide (GPH) cation symporter transporter (TC 2.A.2.4) family.

The protein localises to the membrane. It functions in the pathway glycan biosynthesis; sucrose metabolism. Its function is as follows. Responsible for the transport of sucrose into the cell, with the concomitant uptake of protons (symport system). Can also transport maltose at a lesser rate. In Spinacia oleracea (Spinach), this protein is Sucrose transport protein.